Reading from the N-terminus, the 215-residue chain is Probable nicotinate-nucleotide adenylyltransferase (215 aa).

Belongs to the NadD family.

The catalysed reaction is nicotinate beta-D-ribonucleotide + ATP + H(+) = deamido-NAD(+) + diphosphate. Its pathway is cofactor biosynthesis; NAD(+) biosynthesis; deamido-NAD(+) from nicotinate D-ribonucleotide: step 1/1. Catalyzes the reversible adenylation of nicotinate mononucleotide (NaMN) to nicotinic acid adenine dinucleotide (NaAD). The sequence is that of Probable nicotinate-nucleotide adenylyltransferase from Coxiella burnetii (strain Dugway 5J108-111).